Reading from the N-terminus, the 229-residue chain is Isopentenyl-diphosphate delta-isomerase (229 aa).

Residue lysine 39 coordinates substrate. Mg(2+) contacts are provided by histidine 43 and histidine 54. The region spanning 52 to 202 is the Nudix hydrolase domain; the sequence is LLHRAFSMFI…QYGFTPWFKL (151 aa). 2 residues coordinate substrate: glutamine 72 and lysine 77. Cysteine 89 is a catalytic residue. Serine 90 lines the substrate pocket. 2 residues coordinate Mg(2+): glutamate 152 and glutamate 154. Residue glutamate 154 is part of the active site.

This sequence belongs to the IPP isomerase type 1 family. Mg(2+) serves as cofactor.

It is found in the cytoplasm. The protein localises to the nucleus. It catalyses the reaction isopentenyl diphosphate = dimethylallyl diphosphate. The protein operates within isoprenoid biosynthesis; dimethylallyl diphosphate biosynthesis; dimethylallyl diphosphate from isopentenyl diphosphate: step 1/1. Isopentenyl-diphosphate delta-isomerase; part of the second module of ergosterol biosynthesis pathway that includes the middle steps of the pathway. Idi1 catalyzes the 1,3-allylic rearrangement of isopentenyl (IPP) to its highly electrophilic allylic isomer, dimethylallyl diphosphate (DMAPP). The second module is carried out in the vacuole and involves the formation of farnesyl diphosphate, which is also an important intermediate in the biosynthesis of ubiquinone, dolichol, heme and prenylated proteins. Activity by the mevalonate kinase erg12 first converts mevalonate into 5-phosphomevalonate. 5-phosphomevalonate is then further converted to 5-diphosphomevalonate by the phosphomevalonate kinase erg8. The diphosphomevalonate decarboxylase mvd1 then produces isopentenyl diphosphate. The isopentenyl-diphosphate delta-isomerase idi1 then catalyzes the 1,3-allylic rearrangement of the homoallylic substrate isopentenyl (IPP) to its highly electrophilic allylic isomer, dimethylallyl diphosphate (DMAPP). Finally the farnesyl diphosphate synthase fps1 catalyzes the sequential condensation of isopentenyl pyrophosphate with dimethylallyl pyrophosphate, and then with the resultant geranylpyrophosphate to the ultimate product farnesyl pyrophosphate. This is Isopentenyl-diphosphate delta-isomerase from Schizosaccharomyces pombe (strain 972 / ATCC 24843) (Fission yeast).